We begin with the raw amino-acid sequence, 158 residues long: Small ribosomal subunit protein uS7 (158 aa).

This sequence belongs to the universal ribosomal protein uS7 family. Part of the 30S ribosomal subunit. Contacts proteins S9 and S11.

One of the primary rRNA binding proteins, it binds directly to 16S rRNA where it nucleates assembly of the head domain of the 30S subunit. Is located at the subunit interface close to the decoding center, probably blocks exit of the E-site tRNA. This is Small ribosomal subunit protein uS7 from Flavobacterium johnsoniae (strain ATCC 17061 / DSM 2064 / JCM 8514 / BCRC 14874 / CCUG 350202 / NBRC 14942 / NCIMB 11054 / UW101) (Cytophaga johnsonae).